The chain runs to 291 residues: G1/S-specific cyclin-D1 (291 aa).

Threonine 282 is modified (phosphothreonine).

The protein belongs to the cyclin family. Cyclin D subfamily. Interacts with the cdk4 and cdk6 protein kinases to form a serine/threonine kinase holoenzyme complex. The cyclin subunit imparts substrate specificity to the complex. Phosphorylation at Thr-282 by MAP kinases is required for ubiquitination and degradation by the DCX(AMBRA1) complex. Post-translationally, ubiquitinated by the DCX(AMBRA1) complex during the transition from G1 to S cell phase, leading to its degradation. The DCX(AMBRA1) complex represents the major regulator of CCND1 stability during the G1/S transition.

It is found in the nucleus. It localises to the cytoplasm. Functionally, regulatory component of the cyclin D1-CDK4 (DC) complex that phosphorylates and inhibits members of the retinoblastoma (RB) protein family including RB1 and regulates the cell-cycle during G(1)/S transition. Phosphorylation of RB1 allows dissociation of the transcription factor E2F from the RB/E2F complex and the subsequent transcription of E2F target genes which are responsible for the progression through the G(1) phase. Hypophosphorylates RB1 in early G(1) phase. Cyclin D-CDK4 complexes are major integrators of various mitogenenic and antimitogenic signals. In Xenopus laevis (African clawed frog), this protein is G1/S-specific cyclin-D1 (ccnd1).